A 353-amino-acid chain; its full sequence is Photosystem II protein D1 (353 aa).

Threonine 2 is modified (N-acetylthreonine). The residue at position 2 (threonine 2) is a Phosphothreonine. 3 helical membrane-spanning segments follow: residues 29 to 46 (YIGW…TATS), 118 to 133 (HFLL…EWEL), and 142 to 156 (WIAV…AATA). Histidine 118 is a binding site for chlorophyll a. Tyrosine 126 serves as a coordination point for pheophytin a. [CaMn4O5] cluster-binding residues include aspartate 170 and glutamate 189. The chain crosses the membrane as a helical span at residues 197 to 218 (FHMLGVAGVFGGSLFSAMHGSL). Residue histidine 198 coordinates chlorophyll a. A quinone contacts are provided by residues histidine 215 and 264-265 (SF). Position 215 (histidine 215) interacts with Fe cation. Histidine 272 contacts Fe cation. A helical transmembrane segment spans residues 274 to 288 (FLAAWPVVGIWFTAL). Residues histidine 332, glutamate 333, aspartate 342, and alanine 344 each contribute to the [CaMn4O5] cluster site. The propeptide occupies 345 to 353 (ALEVPSLNG).

This sequence belongs to the reaction center PufL/M/PsbA/D family. In terms of assembly, PSII is composed of 1 copy each of membrane proteins PsbA, PsbB, PsbC, PsbD, PsbE, PsbF, PsbH, PsbI, PsbJ, PsbK, PsbL, PsbM, PsbT, PsbX, PsbY, PsbZ, Psb30/Ycf12, at least 3 peripheral proteins of the oxygen-evolving complex and a large number of cofactors. It forms dimeric complexes. It depends on The D1/D2 heterodimer binds P680, chlorophylls that are the primary electron donor of PSII, and subsequent electron acceptors. It shares a non-heme iron and each subunit binds pheophytin, quinone, additional chlorophylls, carotenoids and lipids. D1 provides most of the ligands for the Mn4-Ca-O5 cluster of the oxygen-evolving complex (OEC). There is also a Cl(-1) ion associated with D1 and D2, which is required for oxygen evolution. The PSII complex binds additional chlorophylls, carotenoids and specific lipids. as a cofactor. Post-translationally, tyr-161 forms a radical intermediate that is referred to as redox-active TyrZ, YZ or Y-Z. C-terminally processed by CTPA; processing is essential to allow assembly of the oxygen-evolving complex and thus photosynthetic growth.

It is found in the plastid. The protein localises to the chloroplast thylakoid membrane. It catalyses the reaction 2 a plastoquinone + 4 hnu + 2 H2O = 2 a plastoquinol + O2. Photosystem II (PSII) is a light-driven water:plastoquinone oxidoreductase that uses light energy to abstract electrons from H(2)O, generating O(2) and a proton gradient subsequently used for ATP formation. It consists of a core antenna complex that captures photons, and an electron transfer chain that converts photonic excitation into a charge separation. The D1/D2 (PsbA/PsbD) reaction center heterodimer binds P680, the primary electron donor of PSII as well as several subsequent electron acceptors. This Oryza nivara (Indian wild rice) protein is Photosystem II protein D1.